The sequence spans 150 residues: NmrA-like family domain-containing protein 1 (150 aa).

Residues 7–12, 33–37, and Lys71 each bind NADP(+); these read GATGAQ and RNPEQ.

It belongs to the NmrA-type oxidoreductase family. As to quaternary structure, homodimer. Interacts with ASS1. Interaction is enhanced by low NADPH/NADP(+) ratios, which results in inhibition of ASS1 activity.

It localises to the cytoplasm. The protein resides in the perinuclear region. Its subcellular location is the nucleus. Redox sensor protein. Undergoes restructuring and subcellular redistribution in response to changes in intracellular NADPH/NADP(+) levels. At low NADPH concentrations the protein is found mainly as a monomer, and binds argininosuccinate synthase (ASS1), the enzyme involved in nitric oxide synthesis. Association with ASS1 impairs its activity and reduces the production of nitric oxide, which subsecuently prevents apoptosis. Under normal NADPH concentrations, the protein is found as a dimer and hides the binding site for ASS1. The homodimer binds one molecule of NADPH. Has higher affinity for NADPH than for NADP(+). Binding to NADPH is necessary to form a stable dimer. In Rattus norvegicus (Rat), this protein is NmrA-like family domain-containing protein 1.